Here is a 283-residue protein sequence, read N- to C-terminus: Phosphatidylglycerol--prolipoprotein diacylglyceryl transferase (283 aa).

Transmembrane regions (helical) follow at residues 18–38 (LGGIEVHWYGLAYACAIVVAF), 62–82 (YFLWAELGIVLGARIGYVLIY), 106–126 (FIGIRGMSYHGGLVGFLIASY), 136–156 (LLIYLDLIAISLPLGYVFGRI), 190–210 (PSQLIEAFLEGVVVFLMVMWA), 218–238 (GLLIVVYGLGYSLMRFIAEFY), and 252–272 (LSMGQILSVFMVIVSLGILLY). Arg-155 serves as a coordination point for a 1,2-diacyl-sn-glycero-3-phospho-(1'-sn-glycerol).

It belongs to the Lgt family.

Its subcellular location is the cell inner membrane. It catalyses the reaction L-cysteinyl-[prolipoprotein] + a 1,2-diacyl-sn-glycero-3-phospho-(1'-sn-glycerol) = an S-1,2-diacyl-sn-glyceryl-L-cysteinyl-[prolipoprotein] + sn-glycerol 1-phosphate + H(+). Its pathway is protein modification; lipoprotein biosynthesis (diacylglyceryl transfer). Functionally, catalyzes the transfer of the diacylglyceryl group from phosphatidylglycerol to the sulfhydryl group of the N-terminal cysteine of a prolipoprotein, the first step in the formation of mature lipoproteins. This Helicobacter pylori (strain J99 / ATCC 700824) (Campylobacter pylori J99) protein is Phosphatidylglycerol--prolipoprotein diacylglyceryl transferase.